Here is a 428-residue protein sequence, read N- to C-terminus: C4-dicarboxylate transport protein 1 (428 aa).

The next 8 membrane-spanning stretches (helical) occupy residues 5-27, 42-64, 77-99, 150-167, 188-210, 225-247, 314-336, and 351-373; these read FYKI…GHFE, IQLI…IAGM, ALLY…GHIF, ILQI…LSAM, IVHV…TIGK, TFYL…LTGF, IFIS…LAVA, and FITL…VLIL.

It belongs to the dicarboxylate/amino acid:cation symporter (DAACS) (TC 2.A.23) family.

Its subcellular location is the cell inner membrane. Functionally, responsible for the transport of dicarboxylates such as succinate, fumarate, and malate from the periplasm across the membrane. In Ralstonia nicotianae (strain ATCC BAA-1114 / GMI1000) (Ralstonia solanacearum), this protein is C4-dicarboxylate transport protein 1 (dctA1).